Consider the following 76-residue polypeptide: U-scoloptoxin(13)-Sa1a (76 aa).

The first 22 residues, 1 to 22 (MAYIFALIFAFVVCINTDVIQA), serve as a signal peptide directing secretion.

It belongs to the scoloptoxin-13 family. Contains 4 disulfide bonds. Expressed by the venom gland.

The protein resides in the secreted. The sequence is that of U-scoloptoxin(13)-Sa1a from Scolopendra alternans (Florida Keys giant centipede).